Here is a 346-residue protein sequence, read N- to C-terminus: NADH-ubiquinone oxidoreductase chain 2 (346 aa).

The next 10 helical transmembrane spans lie at 3-23, 25-45, 67-87, 96-116, 122-142, 145-165, 200-220, 238-258, 273-293, and 324-344; these read PIIF…VMIS, HWLL…PIMM, SMLL…WTVM, MLMT…FWVP, IPLS…MSVL, IFPS…ILIG, TLLN…MFMA, IMTI…PLSG, NSII…YFYM, and FLPT…MLSV.

Belongs to the complex I subunit 2 family. In terms of assembly, core subunit of respiratory chain NADH dehydrogenase (Complex I) which is composed of 45 different subunits. Interacts with TMEM242.

It localises to the mitochondrion inner membrane. The enzyme catalyses a ubiquinone + NADH + 5 H(+)(in) = a ubiquinol + NAD(+) + 4 H(+)(out). Its function is as follows. Core subunit of the mitochondrial membrane respiratory chain NADH dehydrogenase (Complex I) which catalyzes electron transfer from NADH through the respiratory chain, using ubiquinone as an electron acceptor. Essential for the catalytic activity and assembly of complex I. This is NADH-ubiquinone oxidoreductase chain 2 from Bos mutus grunniens (Wild yak).